Here is a 552-residue protein sequence, read N- to C-terminus: Membrane protein insertase YidC (552 aa).

Residues 3 to 23 form a helical membrane-spanning segment; sequence IKRTVLWVIFFMSAVMLFDNW. Residues 35 to 59 form a disordered region; that stretch reads PSATPTKTVGSAAPGTTTPGTQPAD. Residues 42–59 are compositionally biased toward low complexity; it reads TVGSAAPGTTTPGTQPAD. The next 3 helical transmembrane spans lie at 364 to 384, 430 to 450, and 504 to 524; these read WGWS…PLSA, FGGC…YWVL, and MMFM…GLVL.

The protein belongs to the OXA1/ALB3/YidC family. Type 1 subfamily. In terms of assembly, interacts with the Sec translocase complex via SecD. Specifically interacts with transmembrane segments of nascent integral membrane proteins during membrane integration.

It localises to the cell inner membrane. Required for the insertion and/or proper folding and/or complex formation of integral membrane proteins into the membrane. Involved in integration of membrane proteins that insert both dependently and independently of the Sec translocase complex, as well as at least some lipoproteins. Aids folding of multispanning membrane proteins. This Paraburkholderia phytofirmans (strain DSM 17436 / LMG 22146 / PsJN) (Burkholderia phytofirmans) protein is Membrane protein insertase YidC.